We begin with the raw amino-acid sequence, 468 residues long: UDP-N-acetylmuramate--L-alanine ligase (468 aa).

116–122 is an ATP binding site; that stretch reads GTHGKTT.

Belongs to the MurCDEF family.

Its subcellular location is the cytoplasm. It carries out the reaction UDP-N-acetyl-alpha-D-muramate + L-alanine + ATP = UDP-N-acetyl-alpha-D-muramoyl-L-alanine + ADP + phosphate + H(+). The protein operates within cell wall biogenesis; peptidoglycan biosynthesis. Functionally, cell wall formation. This is UDP-N-acetylmuramate--L-alanine ligase from Fusobacterium nucleatum subsp. nucleatum (strain ATCC 25586 / DSM 15643 / BCRC 10681 / CIP 101130 / JCM 8532 / KCTC 2640 / LMG 13131 / VPI 4355).